We begin with the raw amino-acid sequence, 846 residues long: Integrin beta-PS (846 aa).

The signal sequence occupies residues 1-28 (MILERNRRCQLALLMIAILAAIAGQTDA). The Extracellular portion of the chain corresponds to 29-777 (QKAAKLTAVS…NKECPAKVFM (749 aa)). Residues Cys46 and Cys55 are joined by a disulfide bond. Asn72 carries an N-linked (GlcNAc...) asparagine glycan. One can recognise a VWFA domain in the interval 186–419 (DLYYLMDLSK…ELVKEEYRKI (234 aa)). Cys249 and Cys252 are joined by a disulfide. N-linked (GlcNAc...) asparagine glycosylation is found at Asn266 and Asn277. A disulfide bridge links Cys300 with Cys341. Asn403 and Asn428 each carry an N-linked (GlcNAc...) asparagine glycan. Intrachain disulfides connect Cys441–Cys453, Cys473–Cys741, Cys507–Cys530, Cys522–Cys533, Cys535–Cys544, Cys546–Cys579, Cys561–Cys577, Cys571–Cys582, Cys584–Cys599, Cys601–Cys624, Cys606–Cys622, Cys614–Cys627, Cys629–Cys638, Cys640–Cys664, Cys647–Cys662, Cys656–Cys667, Cys669–Cys682, Cys685–Cys688, Cys692–Cys701, Cys698–Cys771, and Cys719–Cys749. I-EGF domains are found at residues 507–545 (CENP…NKCE), 546–600 (CSAT…KHCE), 601–639 (CDNF…SNCG), and 640–683 (CQES…RHCE). A glycan (N-linked (GlcNAc...) asparagine) is linked at Asn557. Residue Asn603 is glycosylated (N-linked (GlcNAc...) asparagine). N-linked (GlcNAc...) asparagine glycosylation is present at Asn644. Residue Asn718 is glycosylated (N-linked (GlcNAc...) asparagine). Residues 778-798 (LGIVMGVIAAIVLVGLAILLL) traverse the membrane as a helical segment. Topologically, residues 799 to 846 (WKLLTTIHDRREFARFEKERMNAKWDTGENPIYKQATSTFKNPMYAGK) are cytoplasmic. Phosphotyrosine is present on residues Tyr831 and Tyr843.

The protein belongs to the integrin beta chain family. As to quaternary structure, heterodimer of an alpha and a beta subunit. Beta-PS associates with either alpha-PS1, alpha-PS2, alpha-PS3, alpha-PS4 or alpha-PS5. In terms of tissue distribution, in ovaries, strongly expressed in follicle cells. In oocytes, expressed in the forming dorsal appendages (at protein level). Expressed in the embryonic dorsal cuticle, the larval eye and the wing imaginal disk. In testes, detected at the interface between somatic hub cells and cyst stem cells.

It localises to the cell membrane. Its subcellular location is the apical cell membrane. The protein localises to the lateral cell membrane. It is found in the basal cell membrane. Its function is as follows. Integrin alpha-PS1/beta-PS is a receptor for laminin. Integrin alpha-PS2/beta-PS is a receptor for Tig, wb and Ten-m. Contributes to endodermal integrity and adhesion between the midgut epithelium and the surrounding visceral muscle. Essential for migration of the primordial midgut cells and for maintaining, but not establishing, cell polarity in the midgut epithelium. The two beta subunits mediate midgut migration by distinct mechanisms: beta-PS requires rhea/talin and Itgbn does not. Required for rhea/talin correct cellular localization in the midgut. Required for many embryonic (dorsal closure and somatic muscle attachments) and postembryonic developmental processes (attachment between cell layers of imaginal disks, organization of ommatidial arrays and flight muscle development). Involved in the function and/or development of the olfactory system. In the testes, essential for shv-dependent maintenance of somatic hub cells and their localization to the apical tip. Plays a role in timely border cell migration during oogenesis. This Drosophila melanogaster (Fruit fly) protein is Integrin beta-PS (mys).